The chain runs to 201 residues: Ras-related protein Rab-10 (201 aa).

A GTP-binding site is contributed by 16–23; it reads GDSGVGKT. The Effector region motif lies at 38 to 46; the sequence is FISTIGIDF. Residues 64-68, 122-125, and 152-154 contribute to the GTP site; these read DTAGQ, NKCD, and SAK. The disordered stretch occupies residues 175 to 201; sequence PDSTDEQSRDTVNPVQPQRQSSSGGCC. Polar residues predominate over residues 184–201; it reads DTVNPVQPQRQSSSGGCC. Residues cysteine 200 and cysteine 201 are each lipidated (S-geranylgeranyl cysteine).

It belongs to the small GTPase superfamily. Rab family. As to quaternary structure, interacts (GTP-bound form) with ehbp-1 (via C-terminal coiled coil). Interacts (GTP-bound form) with cnt-1 (via C-terminal ankyrin repeat). Interacts (GTP-bound form) with rab-5 GAP, tbc-2 (via putative coiled coil domain). Interacts (GTP-bound form) with amph-1. Almost ubiquitously expressed. Expressed in intestine, hypodermis, seam cells, body-wall muscles, many neurons, oviduct sheath cell, spermatheca, coelomocytes and pharyngeal and nerve ring.

It localises to the early endosome membrane. Its subcellular location is the late endosome membrane. The protein resides in the golgi apparatus membrane. It is found in the endosome membrane. The enzyme catalyses GTP + H2O = GDP + phosphate + H(+). With respect to regulation, rab activation is generally mediated by a guanine exchange factor (GEF), while inactivation through hydrolysis of bound GTP is catalyzed by a GTPase activating protein (GAP). Tbc-4 is a likely GAP of this rab. Denn-4 is a putative GEF of this rab. In terms of biological role, the small GTPases Rab are key regulators of intracellular membrane trafficking, from the formation of transport vesicles to their fusion with membranes. Rabs cycle between an inactive GDP-bound form and an active GTP-bound form that is able to recruit to membranes different set of downstream effectors directly responsible for vesicle formation, movement, tethering and fusion. Required for basolateral endocytic recycling, the return of macromolecules and fluid from endosomes to the plasma membrane, in polarized epithelial cells of the intestine upstream of rme-1. Involved in the formation of the endosomal tubular network that is required for basolateral recycling of clathrin-independent endocytic cargo such as daf-4 in the intestine. Required for the recruitment of cnt-1 effector to endosomal membranes in the intestinal epithelium, which is important for the regulation of levels of endosomal phosphatidylinositol-4,5-bisphosphate, a key phosphoinositide in membrane traffic, and for the recruitment of endosomal membrane-bending proteins, rme-1 and sdpn-1. Recruits the rab-5 GTPase-activating protein tbc-2 to endosomes where it then inactivates rab-5 resulting in removal of rab-5 from membranes, which is necessary for cargo transport from early endosomes to recycling endosomes in the basolateral intestine. Regulates recycling of synaptic membrane AMPA glutamate receptor, glr-1, from intracellular endosomal compartments back to synapses in a cholesterol-dependent endocytosis pathway functioning after clathrin-independent endocytosis in command interneurons. Regulates neuropeptide release from dense core vesicles (DCVs) of cholinergic motoneurons in cooperation with rab-5. They reciprocally recruit each other's inactivating GAP molecule leading to local exclusion of one or the other rab protein at the Golgi-endosomal interphase at an essential stage during DCV sorting. Regulates membrane trafficking of membranes and dendrite proteins from the Golgi and/or endosomal compartments to plasma membrane during dendrite morphogenesis together with the exocyst complex in the multi-dendritic PVD sensory neurons acting in a cell-autonomous manner and requiring its GTPase activity. Functions cell-autonomously together with the exocyst complex to regulate dendrite morphogenesis and anterior-posterior patterning of the PVD neurons dendritic arbor by balancing the anterograde and retrograde transport via molecular motors unc-116 (kinesin heavy chain) and dhc-1 (dynein heavy chain) to appropriately transport branching factors, such as dma-1, to the specific subcellular regions of the developing dendrite in its GTPase activity-dependent manner. The polypeptide is Ras-related protein Rab-10 (Caenorhabditis elegans).